The chain runs to 182 residues: Ribosome maturation factor RimM (182 aa).

Positions 102–182 (GEGDYYWKDL…TIEVDWDPGF (81 aa)) constitute a PRC barrel domain.

The protein belongs to the RimM family. Binds ribosomal protein uS19.

It is found in the cytoplasm. An accessory protein needed during the final step in the assembly of 30S ribosomal subunit, possibly for assembly of the head region. Essential for efficient processing of 16S rRNA. May be needed both before and after RbfA during the maturation of 16S rRNA. It has affinity for free ribosomal 30S subunits but not for 70S ribosomes. This Pectobacterium carotovorum subsp. carotovorum (strain PC1) protein is Ribosome maturation factor RimM.